Consider the following 387-residue polypeptide: Sorting nexin-7 (387 aa).

Positions 30–151 (KDLFITVDAP…VFLTAQAEEL (122 aa)) constitute a PX domain. Positions 73, 75, 103, and 117 each coordinate a 1,2-diacyl-sn-glycero-3-phospho-(1D-myo-inositol-3-phosphate). Residues 178–387 (GVKNRPEEFM…PSEEDSEEKL (210 aa)) enclose the BAR domain.

Belongs to the sorting nexin family. As to quaternary structure, heterodimer; heterodimerizes with SNX4.

The protein resides in the early endosome membrane. In terms of biological role, involved in the regulation of endocytosis and in several stages of intracellular trafficking. Together with SNX4, involved in autophagosome assembly by regulating trafficking and recycling of phospholipid scramblase ATG9A. The chain is Sorting nexin-7 from Mus musculus (Mouse).